Reading from the N-terminus, the 463-residue chain is Regulator of microtubule dynamics protein 3 (463 aa).

The Mitochondrial intermembrane segment spans residues 1–4 (MSKL). Residues 5 to 27 (ILSYRIGLGLVVGAAAGAVIYIV) form a helical membrane-spanning segment. Over 28–463 (FRRNRKKTRK…PATAEEELLV (436 aa)) the chain is Cytoplasmic. Positions 146–161 (IYFTATSGAAHTDAES) match the FFAT motif. Positions 153–192 (GAAHTDAESEGGYSTAYAESDFERESSRASEAEEEDEVSC) are disordered. Positions 173 to 183 (DFERESSRASE) are enriched in basic and acidic residues. Residues 279–302 (AEDAQEKKSFASEGKEEAEAALQK) are a coiled coil.

It belongs to the RMDN family. In terms of assembly, interacts with PTPN2. Interacts with microtubules. Interacts with VAPB. Interacts (FFAT motif) with MOSPD2 (via MSP domain).

The protein resides in the mitochondrion outer membrane. The protein localises to the cytoplasm. It is found in the nucleus. Its subcellular location is the cytoskeleton. It localises to the spindle. The protein resides in the spindle pole. Its function is as follows. Involved in cellular calcium homeostasis regulation. The polypeptide is Regulator of microtubule dynamics protein 3 (rmdn3) (Xenopus laevis (African clawed frog)).